The primary structure comprises 86 residues: RNA-binding protein Hfq (86 aa).

Positions 9-68 (DPYLNTLRKERVPVSIYLVNGIKLQGQIESFDQFVILLKNTVSQMVYKHAISTVVPSRPV) constitute a Sm domain. The disordered stretch occupies residues 66-86 (RPVRLPSAGDSEQADAEPGNA).

It belongs to the Hfq family. Homohexamer.

In terms of biological role, RNA chaperone that binds small regulatory RNA (sRNAs) and mRNAs to facilitate mRNA translational regulation in response to envelope stress, environmental stress and changes in metabolite concentrations. Also binds with high specificity to tRNAs. The sequence is that of RNA-binding protein Hfq from Ectopseudomonas mendocina (strain ymp) (Pseudomonas mendocina).